We begin with the raw amino-acid sequence, 124 residues long: Putative membrane protein insertion efficiency factor (124 aa).

Positions 1 to 24 are disordered; the sequence is MHDPHGHAHTVRPPGRGRNWPGPW. Positions 12-24 are enriched in low complexity; sequence RPPGRGRNWPGPW.

It belongs to the UPF0161 family.

The protein resides in the cell inner membrane. In terms of biological role, could be involved in insertion of integral membrane proteins into the membrane. The chain is Putative membrane protein insertion efficiency factor from Mesorhizobium japonicum (strain LMG 29417 / CECT 9101 / MAFF 303099) (Mesorhizobium loti (strain MAFF 303099)).